The primary structure comprises 243 residues: 6-carboxyhexanoate--CoA ligase (243 aa).

Belongs to the BioW family. In terms of assembly, homodimer. The cofactor is Mg(2+).

The catalysed reaction is heptanedioate + ATP + CoA = 6-carboxyhexanoyl-CoA + AMP + diphosphate. It functions in the pathway metabolic intermediate metabolism; pimeloyl-CoA biosynthesis; pimeloyl-CoA from pimelate: step 1/1. Its function is as follows. Catalyzes the transformation of pimelate into pimeloyl-CoA with concomitant hydrolysis of ATP to AMP. The protein is 6-carboxyhexanoate--CoA ligase of Corynebacterium pseudotuberculosis (strain FRC41).